We begin with the raw amino-acid sequence, 86 residues long: MAHKKGTGSTRNGRDSNSKRLGVKAYGGEKVTAGSILIRQRGTSFLPGINVGKGKDDTLFALKEGTVSFESIKRNLRNRKRVNIVI.

The tract at residues 1–24 (MAHKKGTGSTRNGRDSNSKRLGVK) is disordered.

Belongs to the bacterial ribosomal protein bL27 family.

The sequence is that of Large ribosomal subunit protein bL27 from Prochlorococcus marinus (strain MIT 9301).